The primary structure comprises 1607 residues: Phosphatidylinositol 3-kinase piki-1 (1607 aa).

Residues 2–21 enclose the UIM domain; the sequence is SDDEELQLAIEISKKTFKDE. Disordered stretches follow at residues 54-91, 105-128, and 142-182; these read EANS…HSQS, STSQ…KFPP, and PPPP…SFAS. Positions 58 to 69 are enriched in polar residues; the sequence is PGPSSYSGSLAT. Over residues 158–169 the composition is skewed to pro residues; sequence PPVPIHPTPPVS. Residues 362 to 453 enclose the PI3K-RBD domain; sequence ASTVKVVVYK…GDDVKLDLGV (92 aa). One can recognise a C2 PI3K-type domain in the interval 598-766; it reads KMDFLQIMLN…KIWDTEIYFP (169 aa). In terms of domain architecture, PIK helical spans 776 to 953; it reads PQDFATLDIE…AIRCQNLQQK (178 aa). Residues 1029 to 1303 enclose the PI3K/PI4K catalytic domain; that stretch reads RIEECSVFNS…MIQNSLGSAF (275 aa). Positions 1035–1041 are G-loop; it reads VFNSNAK. The catalytic loop stretch occupies residues 1168-1176; the sequence is GIGDRHNDN. Positions 1187 to 1213 are activation loop; it reads HIDFGKYMGDWQMAAGFRRDRVPFVFT. The region spanning 1344–1458 is the PX domain; it reads GRISRVTVLK…TFFHSILRDN (115 aa). Residues 1472-1601 form the C2 domain; the sequence is SQCQIYLKIE…KNCRTLEGWF (130 aa).

Belongs to the PI3/PI4-kinase family.

Its subcellular location is the cell projection. It localises to the phagocytic cup. It is found in the cytoplasmic vesicle. The protein localises to the phagosome membrane. The protein resides in the cytoplasm. It carries out the reaction a 1,2-diacyl-sn-glycero-3-phospho-(1D-myo-inositol) + ATP = a 1,2-diacyl-sn-glycero-3-phospho-(1D-myo-inositol-3-phosphate) + ADP + H(+). In terms of biological role, phosphatidylinositol 3-kinase involved in clearance of apoptotic cell corpses by phagosomes. Phagosome maturation requires two sequential and non-overlapping pulses of phosphatidylinositol-3-phosphate (PI3P) on the vesicle surface which mediates recruitment of sortins snx-1 and lst-4 and small GTPases rab-5, rab-2 and rab-7. The first pulse is initiated by piki-1, then maintained by vps-34 which also produces the second pulse. Unlike vps-34, not involved in the formation of PI3P in early endosomes. This is Phosphatidylinositol 3-kinase piki-1 from Caenorhabditis elegans.